The chain runs to 427 residues: Glutamate-1-semialdehyde 2,1-aminomutase (427 aa).

Lys265 is modified (N6-(pyridoxal phosphate)lysine).

It belongs to the class-III pyridoxal-phosphate-dependent aminotransferase family. HemL subfamily. As to quaternary structure, homodimer. It depends on pyridoxal 5'-phosphate as a cofactor.

It is found in the cytoplasm. The enzyme catalyses (S)-4-amino-5-oxopentanoate = 5-aminolevulinate. It functions in the pathway porphyrin-containing compound metabolism; protoporphyrin-IX biosynthesis; 5-aminolevulinate from L-glutamyl-tRNA(Glu): step 2/2. This chain is Glutamate-1-semialdehyde 2,1-aminomutase, found in Neisseria meningitidis serogroup A / serotype 4A (strain DSM 15465 / Z2491).